Reading from the N-terminus, the 260-residue chain is MASSGVTRRDPLANKVAIVTASTDGIGLAIARRLAQDGAHVVISSRKQQNVDRAVAALQAEGLSVTGTVCHVGKAEDRERLVATALNLHGGIDILVSNAAVNPFFGKLMDVTEEVWDKILDINVKAMALMTKAVVPEMEKRGGGSVVIVASIAAFNPFSGLGPYNVSKTALVGLTKNLALELAAQNIRVNCLAPGLIKTSFSKALWEDKAQEENIIQKLRIRRLGKPEECAGIVSFLCSEDASYITGETVVVAGGAPSRL.

NADP(+) is bound at residue 18–42 (IVTASTDGIGLAIARRLAQDGAHVV). Lys-74 carries the N6-acetyllysine; alternate modification. N6-succinyllysine; alternate is present on Lys-74. Ser-151 contributes to the substrate binding site. The Proton acceptor role is filled by Tyr-164. Lys-168 serves as a coordination point for NADP(+). At Lys-198 the chain carries N6-acetyllysine; alternate. An N6-succinyllysine; alternate modification is found at Lys-198. Residue Ser-202 is modified to Phosphoserine. Lys-209 is modified (N6-succinyllysine). The short motif at 258–260 (SRL) is the Peroxisomal targeting signal element.

It belongs to the short-chain dehydrogenases/reductases (SDR) family. In terms of assembly, homotetramer. Detected in liver and kidney. Detected at lower levels in heart, lung, spleen, small intestine, testis, brain and stomach.

It is found in the peroxisome. The enzyme catalyses a secondary alcohol + NADP(+) = a ketone + NADPH + H(+). The catalysed reaction is 3alpha-hydroxy-5beta-pregnan-20-one + NADP(+) = 5beta-pregnan-3,20-dione + NADPH + H(+). It carries out the reaction 5beta-dihydrotestosterone + NADPH + H(+) = 5beta-androstane-3alpha,17beta-diol + NADP(+). It catalyses the reaction all-trans-retinol + NADP(+) = all-trans-retinal + NADPH + H(+). The enzyme catalyses isatin + NADPH + H(+) = 3-hydroxyindolin-2-one + NADP(+). Inhibited by flavonoids (kaempferol, quercetin, quercitrin, genistein), myristic acid, pyrazole, barbital, phenobarbital and CuSO4. Functionally, NADPH-dependent oxidoreductase which catalyzes the reduction of a variety of compounds bearing carbonyl groups including ketosteroids, alpha-dicarbonyl compounds, aldehydes, aromatic ketones and quinones. Reduces all-trans-retinal and 9-cis retinal. Reduces 3-ketosteroids and benzil into 3alpha-hydroxysteroids and S-benzoin, respectively, in contrast to the stereoselectivity of primates DHRS4s which produce 3beta-hydroxysteroids and R-benzoin. In the reverse reaction, catalyze the NADP-dependent oxidation of 3alpha-hydroxysteroids and alcohol, but with much lower efficiency. Involved in the metabolism of 3alpha-hydroxysteroids, retinoid, isatin and xenobiotic carbonyl compounds. The chain is Dehydrogenase/reductase SDR family member 4 (DHRS4) from Oryctolagus cuniculus (Rabbit).